The sequence spans 637 residues: 3D-(3,5/4)-trihydroxycyclohexane-1,2-dione hydrolase (637 aa).

Glutamate 66 is a thiamine diphosphate binding site. The tract at residues serine 442–glycine 522 is thiamine pyrophosphate binding. Mg(2+)-binding residues include aspartate 493 and asparagine 520.

This sequence belongs to the TPP enzyme family. It depends on Mg(2+) as a cofactor. Thiamine diphosphate is required as a cofactor.

The enzyme catalyses 3D-3,5/4-trihydroxycyclohexane-1,2-dione + H2O = 5-deoxy-D-glucuronate + H(+). It functions in the pathway polyol metabolism; myo-inositol degradation into acetyl-CoA; acetyl-CoA from myo-inositol: step 3/7. Involved in the cleavage of the C1-C2 bond of 3D-(3,5/4)-trihydroxycyclohexane-1,2-dione (THcHDO) to yield 5-deoxy-glucuronate (5DG). The sequence is that of 3D-(3,5/4)-trihydroxycyclohexane-1,2-dione hydrolase from Bacillus licheniformis (strain ATCC 14580 / DSM 13 / JCM 2505 / CCUG 7422 / NBRC 12200 / NCIMB 9375 / NCTC 10341 / NRRL NRS-1264 / Gibson 46).